A 361-amino-acid polypeptide reads, in one-letter code: Anthranilate phosphoribosyltransferase (361 aa).

Residues Gly-80, 83 to 84 (GD), Thr-88, 90 to 93 (NVST), 108 to 116 (KHGNYSVSS), and Ser-120 each bind 5-phospho-alpha-D-ribose 1-diphosphate. Residue Gly-80 participates in anthranilate binding. Ser-92 contributes to the Mg(2+) binding site. An anthranilate-binding site is contributed by Asn-111. Arg-166 is a binding site for anthranilate. Positions 224 and 225 each coordinate Mg(2+). A disordered region spans residues 338–361 (EGDGEAASTDSAAASTTAGPEDDD). Low complexity predominate over residues 343-355 (AASTDSAAASTTA).

It belongs to the anthranilate phosphoribosyltransferase family. Homodimer. Mg(2+) serves as cofactor.

It catalyses the reaction N-(5-phospho-beta-D-ribosyl)anthranilate + diphosphate = 5-phospho-alpha-D-ribose 1-diphosphate + anthranilate. It functions in the pathway amino-acid biosynthesis; L-tryptophan biosynthesis; L-tryptophan from chorismate: step 2/5. Functionally, catalyzes the transfer of the phosphoribosyl group of 5-phosphorylribose-1-pyrophosphate (PRPP) to anthranilate to yield N-(5'-phosphoribosyl)-anthranilate (PRA). The polypeptide is Anthranilate phosphoribosyltransferase (Halorubrum lacusprofundi (strain ATCC 49239 / DSM 5036 / JCM 8891 / ACAM 34)).